The chain runs to 786 residues: Endonuclease MutS2 (786 aa).

Position 332–339 (332–339 (GPNTGGKT)) interacts with ATP. Residues 711–786 (IDLRGMDSEE…GTGVTVVILK (76 aa)) enclose the Smr domain.

It belongs to the DNA mismatch repair MutS family. MutS2 subfamily. Homodimer. Binds to stalled ribosomes, contacting rRNA.

Functionally, endonuclease that is involved in the suppression of homologous recombination and thus may have a key role in the control of bacterial genetic diversity. Acts as a ribosome collision sensor, splitting the ribosome into its 2 subunits. Detects stalled/collided 70S ribosomes which it binds and splits by an ATP-hydrolysis driven conformational change. Acts upstream of the ribosome quality control system (RQC), a ribosome-associated complex that mediates the extraction of incompletely synthesized nascent chains from stalled ribosomes and their subsequent degradation. Probably generates substrates for RQC. This chain is Endonuclease MutS2, found in Clostridium perfringens (strain SM101 / Type A).